An 874-amino-acid chain; its full sequence is Alanine--tRNA ligase (874 aa).

Zn(2+) is bound by residues histidine 562, histidine 566, cysteine 664, and histidine 668.

Belongs to the class-II aminoacyl-tRNA synthetase family. It depends on Zn(2+) as a cofactor.

The protein localises to the cytoplasm. The catalysed reaction is tRNA(Ala) + L-alanine + ATP = L-alanyl-tRNA(Ala) + AMP + diphosphate. Catalyzes the attachment of alanine to tRNA(Ala) in a two-step reaction: alanine is first activated by ATP to form Ala-AMP and then transferred to the acceptor end of tRNA(Ala). Also edits incorrectly charged Ser-tRNA(Ala) and Gly-tRNA(Ala) via its editing domain. The sequence is that of Alanine--tRNA ligase from Neisseria meningitidis serogroup C (strain 053442).